The chain runs to 447 residues: N-succinylarginine dihydrolase (447 aa).

Substrate is bound by residues 19–28 (AGLSFGNEAS), N110, and 137–138 (HR). E174 is a catalytic residue. Substrate is bound at residue R214. Residue H250 is part of the active site. Substrate-binding residues include D252 and N365. C371 serves as the catalytic Nucleophile.

The protein belongs to the succinylarginine dihydrolase family. In terms of assembly, homodimer.

It carries out the reaction N(2)-succinyl-L-arginine + 2 H2O + 2 H(+) = N(2)-succinyl-L-ornithine + 2 NH4(+) + CO2. Its pathway is amino-acid degradation; L-arginine degradation via AST pathway; L-glutamate and succinate from L-arginine: step 2/5. In terms of biological role, catalyzes the hydrolysis of N(2)-succinylarginine into N(2)-succinylornithine, ammonia and CO(2). This is N-succinylarginine dihydrolase from Acinetobacter baumannii (strain SDF).